The chain runs to 186 residues: Thymidine kinase (186 aa).

8 to 15 (GPMYSGKT) is an ATP binding site. The active-site Proton acceptor is glutamate 86. Position 118 (phenylalanine 118) interacts with substrate. 2 residues coordinate Zn(2+): cysteine 143 and cysteine 146. 162 to 166 (IIEIG) contributes to the substrate binding site. 2 residues coordinate Zn(2+): cysteine 175 and cysteine 178.

Belongs to the thymidine kinase family.

The enzyme catalyses thymidine + ATP = dTMP + ADP + H(+). This chain is Thymidine kinase (TK), found in Choristoneura fumiferana (Spruce budworm moth).